A 301-amino-acid chain; its full sequence is Ribosomal RNA small subunit methyltransferase H (301 aa).

S-adenosyl-L-methionine-binding positions include 31 to 33 (GGY), aspartate 49, phenylalanine 76, aspartate 97, and glutamine 104.

This sequence belongs to the methyltransferase superfamily. RsmH family.

The protein localises to the cytoplasm. It catalyses the reaction cytidine(1402) in 16S rRNA + S-adenosyl-L-methionine = N(4)-methylcytidine(1402) in 16S rRNA + S-adenosyl-L-homocysteine + H(+). Functionally, specifically methylates the N4 position of cytidine in position 1402 (C1402) of 16S rRNA. This is Ribosomal RNA small subunit methyltransferase H from Ehrlichia ruminantium (strain Welgevonden).